A 406-amino-acid polypeptide reads, in one-letter code: Arginine decarboxylase (406 aa).

Lys-8 is modified (N6-(pyridoxal phosphate)lysine). 192 to 202 (VDFGGGLGIDY) lines the substrate pocket.

Belongs to the Orn/Lys/Arg decarboxylase class-II family. SpeA subfamily. The cofactor is pyridoxal 5'-phosphate. Mg(2+) is required as a cofactor.

It carries out the reaction L-arginine + H(+) = agmatine + CO2. It functions in the pathway amine and polyamine biosynthesis; agmatine biosynthesis; agmatine from L-arginine: step 1/1. This Theobroma cacao (Cacao) protein is Arginine decarboxylase (SPE2).